Consider the following 159-residue polypeptide: Bacterial non-heme ferritin (159 aa).

One can recognise a Ferritin-like diiron domain in the interval 1–145 (MISEKLQNAI…GIVDKIKRAG (145 aa)). Residues E17, E50, H53, E94, and Q127 each coordinate Fe cation.

The protein belongs to the ferritin family. Prokaryotic subfamily. As to quaternary structure, homooligomer of 24 subunits that assemble into a spherical protein shell (12 +/- 1 nM diameter) that can sequester at least 2000 iron atoms.

It catalyses the reaction 4 Fe(2+) + O2 + 6 H2O = 4 iron(III) oxide-hydroxide + 12 H(+). In terms of biological role, may alleviate iron toxicity in the presence of oxygen. In Bacteroides fragilis (strain 638R), this protein is Bacterial non-heme ferritin (ftnA).